Here is a 181-residue protein sequence, read N- to C-terminus: UPF0301 protein MXAN_2022 (181 aa).

It belongs to the UPF0301 (AlgH) family.

In Myxococcus xanthus (strain DK1622), this protein is UPF0301 protein MXAN_2022.